The primary structure comprises 196 residues: Holliday junction branch migration complex subunit RuvA (196 aa).

Positions 1 to 63 are domain I; sequence MYDYIKGKLS…DDAHLLFGFH (63 aa). Positions 64 to 142 are domain II; sequence TENEKEIFLN…EASGESATSR (79 aa). The interval 143 to 148 is flexible linker; sequence KVSSEQ. Residues 148–196 form a domain III region; it reads QNSNLEEAMEALLALGYKATELKKVKAFFEGTNETVEQYIKSSLKMLMK.

Belongs to the RuvA family. Homotetramer. Forms an RuvA(8)-RuvB(12)-Holliday junction (HJ) complex. HJ DNA is sandwiched between 2 RuvA tetramers; dsDNA enters through RuvA and exits via RuvB. An RuvB hexamer assembles on each DNA strand where it exits the tetramer. Each RuvB hexamer is contacted by two RuvA subunits (via domain III) on 2 adjacent RuvB subunits; this complex drives branch migration. In the full resolvosome a probable DNA-RuvA(4)-RuvB(12)-RuvC(2) complex forms which resolves the HJ.

The protein resides in the cytoplasm. In terms of biological role, the RuvA-RuvB-RuvC complex processes Holliday junction (HJ) DNA during genetic recombination and DNA repair, while the RuvA-RuvB complex plays an important role in the rescue of blocked DNA replication forks via replication fork reversal (RFR). RuvA specifically binds to HJ cruciform DNA, conferring on it an open structure. The RuvB hexamer acts as an ATP-dependent pump, pulling dsDNA into and through the RuvAB complex. HJ branch migration allows RuvC to scan DNA until it finds its consensus sequence, where it cleaves and resolves the cruciform DNA. This is Holliday junction branch migration complex subunit RuvA from Streptococcus agalactiae serotype Ia (strain ATCC 27591 / A909 / CDC SS700).